The following is a 225-amino-acid chain: uncharacterized protein (225 aa).

This is an uncharacterized protein from Dictyostelium discoideum (Social amoeba).